The following is a 207-amino-acid chain: Guanylate kinase (207 aa).

The 181-residue stretch at 4-184 folds into the Guanylate kinase-like domain; sequence NMYYAISAPS…TLNKIKTIII (181 aa). Residue 11 to 18 coordinates ATP; it reads APSGTGKS.

The protein belongs to the guanylate kinase family.

The protein resides in the cytoplasm. It carries out the reaction GMP + ATP = GDP + ADP. Its function is as follows. Essential for recycling GMP and indirectly, cGMP. This is Guanylate kinase from Wigglesworthia glossinidia brevipalpis.